The chain runs to 103 residues: Putative membrane protein insertion efficiency factor (103 aa).

Belongs to the UPF0161 family.

The protein localises to the cell inner membrane. Functionally, could be involved in insertion of integral membrane proteins into the membrane. In Chlamydia abortus (strain DSM 27085 / S26/3) (Chlamydophila abortus), this protein is Putative membrane protein insertion efficiency factor.